A 494-amino-acid polypeptide reads, in one-letter code: NADH-quinone oxidoreductase subunit N 2 (494 aa).

The next 14 helical transmembrane spans lie at 14–34 (LPQIALTVAAFFVLACDGMLL), 45–65 (IAMLLSVAGSLVALALLPLTA), 82–102 (VVQVVLLLFTLAVTLLSGSVL), 116–136 (IGEFFALLLFATVAALFLVST), 139–159 (LLLIFLAVEFLSLVLYILTAF), 174–194 (FLFGGMSAGFLLFGISLLYGV), 214–234 (LLVAIVLVILGFGFKIAAAPF), 262–282 (FFVFAQVLFIGVASASGNAAW), 289–309 (WMPILAAVAVLSMLLGNLAAL), 317–337 (LLAYSAIGHAGYLLLGLIAHT), 344–364 (LLYYVFTYALAVLGAFGVLAI), 388–408 (ACLLVFLLSLAGIPPLVGFFA), 422–442 (AFGLLWLVILAILMSVVALFY), and 470–490 (ITLLVMAALTLLLGCAPNLLM).

This sequence belongs to the complex I subunit 2 family. As to quaternary structure, NDH-1 is composed of 14 different subunits. Subunits NuoA, H, J, K, L, M, N constitute the membrane sector of the complex.

It localises to the cell inner membrane. The catalysed reaction is a quinone + NADH + 5 H(+)(in) = a quinol + NAD(+) + 4 H(+)(out). In terms of biological role, NDH-1 shuttles electrons from NADH, via FMN and iron-sulfur (Fe-S) centers, to quinones in the respiratory chain. The immediate electron acceptor for the enzyme in this species is believed to be ubiquinone. Couples the redox reaction to proton translocation (for every two electrons transferred, four hydrogen ions are translocated across the cytoplasmic membrane), and thus conserves the redox energy in a proton gradient. This is NADH-quinone oxidoreductase subunit N 2 from Acidobacterium capsulatum (strain ATCC 51196 / DSM 11244 / BCRC 80197 / JCM 7670 / NBRC 15755 / NCIMB 13165 / 161).